Consider the following 428-residue polypeptide: 3-phosphoshikimate 1-carboxyvinyltransferase (428 aa).

3-phosphoshikimate contacts are provided by Lys21, Ser22, and Arg26. Lys21 contributes to the phosphoenolpyruvate binding site. Residues Gly91 and Arg119 each contribute to the phosphoenolpyruvate site. Ser164, Gln166, Asp311, and Lys338 together coordinate 3-phosphoshikimate. Phosphoenolpyruvate is bound at residue Gln166. Asp311 functions as the Proton acceptor in the catalytic mechanism. 2 residues coordinate phosphoenolpyruvate: Arg342 and Arg383.

It belongs to the EPSP synthase family. Monomer.

It is found in the cytoplasm. The enzyme catalyses 3-phosphoshikimate + phosphoenolpyruvate = 5-O-(1-carboxyvinyl)-3-phosphoshikimate + phosphate. It functions in the pathway metabolic intermediate biosynthesis; chorismate biosynthesis; chorismate from D-erythrose 4-phosphate and phosphoenolpyruvate: step 6/7. Its function is as follows. Catalyzes the transfer of the enolpyruvyl moiety of phosphoenolpyruvate (PEP) to the 5-hydroxyl of shikimate-3-phosphate (S3P) to produce enolpyruvyl shikimate-3-phosphate and inorganic phosphate. The protein is 3-phosphoshikimate 1-carboxyvinyltransferase of Campylobacter concisus (strain 13826).